A 545-amino-acid polypeptide reads, in one-letter code: Sulfite oxidase, mitochondrial (545 aa).

Residues 1-79 (MLLLHRAVVL…YQDHRCRAAQ (79 aa)) constitute a mitochondrion transit peptide. The Cytochrome b5 heme-binding domain maps to 82–161 (TRIYTKEEVS…LAQYKVGELN (80 aa)). Residue H118 participates in heme b binding. Phosphoserine is present on S123. 3 residues coordinate heme b: H143, Q145, and H147. The interval 165-174 (KVAPTVETSD) is hinge. Positions 175 to 401 (PYADDPVRHP…YSHWQRRDYK (227 aa)) are moco domain. Residues 215–219 (FTRNH), C264, D322, H361, R366, and 377–379 (HVK) contribute to the Mo-molybdopterin site. The interval 402–538 (GFSPSVDWDT…RGVLSNAWHR (137 aa)) is homodimerization.

In terms of assembly, homodimer. The cofactor is heme b. Mo-molybdopterin is required as a cofactor.

It localises to the mitochondrion intermembrane space. It catalyses the reaction sulfite + O2 + H2O = sulfate + H2O2. The protein operates within energy metabolism; sulfur metabolism. Functionally, catalyzes the oxidation of sulfite to sulfate, the terminal reaction in the oxidative degradation of sulfur-containing amino acids. This Macaca fascicularis (Crab-eating macaque) protein is Sulfite oxidase, mitochondrial (SUOX).